The chain runs to 253 residues: 3-deoxy-manno-octulosonate cytidylyltransferase (253 aa).

It belongs to the KdsB family.

It is found in the cytoplasm. The catalysed reaction is 3-deoxy-alpha-D-manno-oct-2-ulosonate + CTP = CMP-3-deoxy-beta-D-manno-octulosonate + diphosphate. It participates in nucleotide-sugar biosynthesis; CMP-3-deoxy-D-manno-octulosonate biosynthesis; CMP-3-deoxy-D-manno-octulosonate from 3-deoxy-D-manno-octulosonate and CTP: step 1/1. It functions in the pathway bacterial outer membrane biogenesis; lipopolysaccharide biosynthesis. Functionally, activates KDO (a required 8-carbon sugar) for incorporation into bacterial lipopolysaccharide in Gram-negative bacteria. This is 3-deoxy-manno-octulosonate cytidylyltransferase from Neisseria gonorrhoeae (strain ATCC 700825 / FA 1090).